A 122-amino-acid chain; its full sequence is Large ribosomal subunit protein uL14 (122 aa).

The protein belongs to the universal ribosomal protein uL14 family. As to quaternary structure, part of the 50S ribosomal subunit. Forms a cluster with proteins L3 and L19. In the 70S ribosome, L14 and L19 interact and together make contacts with the 16S rRNA in bridges B5 and B8.

In terms of biological role, binds to 23S rRNA. Forms part of two intersubunit bridges in the 70S ribosome. The protein is Large ribosomal subunit protein uL14 of Macrococcus caseolyticus (strain JCSC5402) (Macrococcoides caseolyticum).